A 65-amino-acid polypeptide reads, in one-letter code: MPKMKTHKGAKKRVKITASGKVVAMKTGKRHLNWQKSGKEIRQKGRKFVLAKPEAERIKLLLPYE.

It belongs to the bacterial ribosomal protein bL35 family.

The sequence is that of Large ribosomal subunit protein bL35 from Thermus thermophilus (strain ATCC BAA-163 / DSM 7039 / HB27).